Here is a 336-residue protein sequence, read N- to C-terminus: Phosphate acyltransferase (336 aa).

This sequence belongs to the PlsX family. As to quaternary structure, homodimer. Probably interacts with PlsY.

Its subcellular location is the cytoplasm. The catalysed reaction is a fatty acyl-[ACP] + phosphate = an acyl phosphate + holo-[ACP]. It participates in lipid metabolism; phospholipid metabolism. In terms of biological role, catalyzes the reversible formation of acyl-phosphate (acyl-PO(4)) from acyl-[acyl-carrier-protein] (acyl-ACP). This enzyme utilizes acyl-ACP as fatty acyl donor, but not acyl-CoA. This chain is Phosphate acyltransferase, found in Dictyoglomus turgidum (strain DSM 6724 / Z-1310).